We begin with the raw amino-acid sequence, 271 residues long: Nuclear egress protein 2 (271 aa).

Over methionine 1–arginine 249 the chain is Perinuclear space. Residues serine 250–tryptophan 267 form a helical membrane-spanning segment. Over methionine 268–serine 271 the chain is Nuclear.

This sequence belongs to the herpesviridae NEC2 protein family. In terms of assembly, forms a heterohexameric complex with NEC1. Post-translationally, phosphorylated.

The protein resides in the host nucleus inner membrane. In terms of biological role, plays an essential role in virion nuclear egress, the first step of virion release from infected cell. Within the host nucleus, NEC1 interacts with the newly formed capsid through the vertexes and directs it to the inner nuclear membrane by associating with NEC2. Induces the budding of the capsid at the inner nuclear membrane as well as its envelopment into the perinuclear space. There, the NEC1/NEC2 complex promotes the fusion of the enveloped capsid with the outer nuclear membrane and the subsequent release of the viral capsid into the cytoplasm where it will reach the secondary budding sites in the host Golgi or trans-Golgi network. The protein is Nuclear egress protein 2 of Homo sapiens (Human).